Reading from the N-terminus, the 231-residue chain is Lipoprotein-releasing system ATP-binding protein LolD (231 aa).

The ABC transporter domain maps to 6–231; that stretch reads LKCQSVHKVY…VLAKVAPNSL (226 aa). Position 42–49 (42–49) interacts with ATP; the sequence is GASGSGKS.

The protein belongs to the ABC transporter superfamily. Lipoprotein translocase (TC 3.A.1.125) family. As to quaternary structure, the complex is composed of two ATP-binding proteins (LolD) and two transmembrane proteins (LolC and LolE).

It localises to the cell inner membrane. Its function is as follows. Part of the ABC transporter complex LolCDE involved in the translocation of mature outer membrane-directed lipoproteins, from the inner membrane to the periplasmic chaperone, LolA. Responsible for the formation of the LolA-lipoprotein complex in an ATP-dependent manner. The protein is Lipoprotein-releasing system ATP-binding protein LolD of Hahella chejuensis (strain KCTC 2396).